The primary structure comprises 550 residues: Coiled-coil domain-containing protein 102A (550 aa).

Disordered stretches follow at residues 1–69 (MSHG…DGDW) and 138–247 (GARR…ATEE). 3 positions are modified to phosphoserine: S12, S26, and S28. A compositionally biased stretch (pro residues) spans 37-61 (SLPPTPPSGTPSPGPPPALPLPPAP). A coiled-coil region spans residues 72–161 (REELRLRELE…ARGRELARLR (90 aa)). Composition is skewed to basic and acidic residues over residues 138 to 159 (GARR…ELAR) and 169 to 188 (QTRD…DVGS). Coiled coils occupy residues 263–396 (QKVL…RRQT) and 427–518 (KLKK…NAPL). Disordered stretches follow at residues 472-497 (DELD…QSEN) and 509-550 (LRRQ…IQVA). Positions 530–550 (EEAEDGTSDLDEDEDLQIQVA) are enriched in acidic residues. S537 carries the post-translational modification Phosphoserine.

This is Coiled-coil domain-containing protein 102A (CCDC102A) from Homo sapiens (Human).